Consider the following 382-residue polypeptide: Galactokinase (382 aa).

34-37 (EHTD) is a substrate binding site. 124 to 130 (GAGLSSS) serves as a coordination point for ATP. Residues serine 130 and glutamate 162 each coordinate Mg(2+). The Proton acceptor role is filled by aspartate 174. Tyrosine 223 serves as a coordination point for substrate.

It belongs to the GHMP kinase family. GalK subfamily.

Its subcellular location is the cytoplasm. It carries out the reaction alpha-D-galactose + ATP = alpha-D-galactose 1-phosphate + ADP + H(+). Its pathway is carbohydrate metabolism; galactose metabolism. Functionally, catalyzes the transfer of the gamma-phosphate of ATP to D-galactose to form alpha-D-galactose-1-phosphate (Gal-1-P). This is Galactokinase from Salmonella paratyphi B (strain ATCC BAA-1250 / SPB7).